The chain runs to 485 residues: NADH-quinone oxidoreductase subunit N (485 aa).

The next 14 membrane-spanning stretches (helical) occupy residues 8–28, 35–55, 78–98, 104–124, 125–145, 159–179, 203–223, 235–255, 271–291, 297–317, 327–347, 374–394, 408–427, and 449–469; these read LIALLPLLIVGLTVVVVMLGI, FINATLTVIGLNLALLSLYFV, GLVILASLATCTFAYPWLVGY, EFYLLVLIATLGGILLASANH, LASLFLGIELISLPLFGLVGY, YMLLSAAASSFLLFGMALLYA, VLAGMGMMIVGLGFKLSLVPF, PAPVSTFLATASKIAIFAVVM, MVLSIIAVCSILFGNLMAISQ, LLGYSSIAHLGYLLVALIAVQ, GVYLAGYLFSSLGAFGVVSLM, AVMTVMMLSLAGIPMTLGFIG, WWLTGAVVLGSAIGLYYYLR, and ALTAGGVVVLISAALVLLLGV.

The protein belongs to the complex I subunit 2 family. In terms of assembly, NDH-1 is composed of 13 different subunits. Subunits NuoA, H, J, K, L, M, N constitute the membrane sector of the complex.

It is found in the cell inner membrane. The catalysed reaction is a quinone + NADH + 5 H(+)(in) = a quinol + NAD(+) + 4 H(+)(out). In terms of biological role, NDH-1 shuttles electrons from NADH, via FMN and iron-sulfur (Fe-S) centers, to quinones in the respiratory chain. The immediate electron acceptor for the enzyme in this species is believed to be ubiquinone. Couples the redox reaction to proton translocation (for every two electrons transferred, four hydrogen ions are translocated across the cytoplasmic membrane), and thus conserves the redox energy in a proton gradient. The polypeptide is NADH-quinone oxidoreductase subunit N (Serratia proteamaculans (strain 568)).